We begin with the raw amino-acid sequence, 333 residues long: Glycerol-3-phosphate dehydrogenase [NAD(P)+] (333 aa).

4 residues coordinate NADPH: Ser-13, Tyr-14, Arg-34, and Lys-108. Sn-glycerol 3-phosphate contacts are provided by Lys-108, Gly-137, and Thr-139. Ala-141 serves as a coordination point for NADPH. The sn-glycerol 3-phosphate site is built by Lys-193, Asp-246, Ser-256, Arg-257, and Asn-258. Lys-193 acts as the Proton acceptor in catalysis. Arg-257 lines the NADPH pocket. Position 283 (Glu-283) interacts with NADPH.

The protein belongs to the NAD-dependent glycerol-3-phosphate dehydrogenase family.

Its subcellular location is the cytoplasm. It carries out the reaction sn-glycerol 3-phosphate + NAD(+) = dihydroxyacetone phosphate + NADH + H(+). The catalysed reaction is sn-glycerol 3-phosphate + NADP(+) = dihydroxyacetone phosphate + NADPH + H(+). It functions in the pathway membrane lipid metabolism; glycerophospholipid metabolism. Functionally, catalyzes the reduction of the glycolytic intermediate dihydroxyacetone phosphate (DHAP) to sn-glycerol 3-phosphate (G3P), the key precursor for phospholipid synthesis. The sequence is that of Glycerol-3-phosphate dehydrogenase [NAD(P)+] from Idiomarina loihiensis (strain ATCC BAA-735 / DSM 15497 / L2-TR).